Reading from the N-terminus, the 424-residue chain is Histidine--tRNA ligase (424 aa).

The protein belongs to the class-II aminoacyl-tRNA synthetase family. As to quaternary structure, homodimer.

It is found in the cytoplasm. The catalysed reaction is tRNA(His) + L-histidine + ATP = L-histidyl-tRNA(His) + AMP + diphosphate + H(+). The sequence is that of Histidine--tRNA ligase from Staphylococcus epidermidis (strain ATCC 12228 / FDA PCI 1200).